A 245-amino-acid chain; its full sequence is Tetraspanin-6 (245 aa).

The Cytoplasmic segment spans residues 1 to 19 (MASPSRRLQTKPVITCFKS). The helical transmembrane segment at 20–40 (VLLIYTFIFWITGVILLAVGI) threads the bilayer. At 41–59 (WGKVSLENYFSLLNEKATN) the chain is on the extracellular side. The chain crosses the membrane as a helical span at residues 60 to 80 (VPFVLIGTGTVIILLGTFGCF). The Cytoplasmic segment spans residues 81–93 (ATCRASAWMLKLY). A helical membrane pass occupies residues 94-114 (AMFLTLIFLVELVAAIIGFVF). The Extracellular segment spans residues 115–208 (RHEIKNSLKN…IMVMTIIESE (94 aa)). N134 is a glycosylation site (N-linked (GlcNAc...) asparagine). The chain crosses the membrane as a helical span at residues 209-229 (MGVVAGISFGVACFQLIGIFL). At 230–245 (AYCLSRAITNNQYEIV) the chain is on the cytoplasmic side.

The protein belongs to the tetraspanin (TM4SF) family.

It localises to the membrane. This is Tetraspanin-6 (TSPAN6) from Bos taurus (Bovine).